Here is a 189-residue protein sequence, read N- to C-terminus: MEASMKIKEIIVVEGKDDTVAIKRAVDADTIETNGSAIGDHVIEQVKLAQQKRGVIIFTDPDYPGERIRKIISDKVPGCKHAFLPKEEALAKRKKGVGIEHASNESIRRALENIHEEMEAYTGEISWSDLVDAGLVGGEMAKSRRERMGKLLKIGYTNAKQLHKRLQMFQVSKESFAEAYKQVIQEEKK.

The Toprim domain maps to lysine 8 to alanine 91. Mg(2+)-binding residues include glutamate 14, aspartate 60, and aspartate 62.

The protein belongs to the ribonuclease M5 family. Mg(2+) is required as a cofactor.

Its subcellular location is the cytoplasm. The enzyme catalyses Endonucleolytic cleavage of RNA, removing 21 and 42 nucleotides, respectively, from the 5'- and 3'-termini of a 5S-rRNA precursor.. Its function is as follows. Required for correct processing of both the 5' and 3' ends of 5S rRNA precursor. Cleaves both sides of a double-stranded region yielding mature 5S rRNA in one step. This is Ribonuclease M5 from Bacillus cereus (strain ATCC 14579 / DSM 31 / CCUG 7414 / JCM 2152 / NBRC 15305 / NCIMB 9373 / NCTC 2599 / NRRL B-3711).